The primary structure comprises 189 residues: NADH-quinone oxidoreductase subunit B (189 aa).

The [4Fe-4S] cluster site is built by cysteine 39, cysteine 40, cysteine 104, and cysteine 135.

The protein belongs to the complex I 20 kDa subunit family. NDH-1 is composed of 14 different subunits. Subunits NuoB, C, D, E, F, and G constitute the peripheral sector of the complex. Requires [4Fe-4S] cluster as cofactor.

It localises to the cell inner membrane. It catalyses the reaction a quinone + NADH + 5 H(+)(in) = a quinol + NAD(+) + 4 H(+)(out). Functionally, NDH-1 shuttles electrons from NADH, via FMN and iron-sulfur (Fe-S) centers, to quinones in the respiratory chain. The immediate electron acceptor for the enzyme in this species is believed to be a menaquinone. Couples the redox reaction to proton translocation (for every two electrons transferred, four hydrogen ions are translocated across the cytoplasmic membrane), and thus conserves the redox energy in a proton gradient. The protein is NADH-quinone oxidoreductase subunit B of Chlorobium phaeovibrioides (strain DSM 265 / 1930) (Prosthecochloris vibrioformis (strain DSM 265)).